The chain runs to 195 residues: Probable GTP-binding protein EngB (195 aa).

The 172-residue stretch at 24 to 195 folds into the EngB-type G domain; the sequence is DWPEIALAGR…EAWEAILRYL (172 aa). GTP-binding positions include 32-39, 59-63, 77-80, 144-147, and 176-178; these read GRSNVGKS, GKTQL, DVPG, TKAD, and FSS. Ser39 and Thr61 together coordinate Mg(2+).

The protein belongs to the TRAFAC class TrmE-Era-EngA-EngB-Septin-like GTPase superfamily. EngB GTPase family. Mg(2+) is required as a cofactor.

Functionally, necessary for normal cell division and for the maintenance of normal septation. The protein is Probable GTP-binding protein EngB of Lactococcus lactis subsp. lactis (strain IL1403) (Streptococcus lactis).